We begin with the raw amino-acid sequence, 153 residues long: Hydrogenase expression/formation protein HoxT (153 aa).

The protein belongs to the HupJ family.

The protein is Hydrogenase expression/formation protein HoxT (hoxT) of Azotobacter vinelandii.